The sequence spans 252 residues: Imidazole glycerol phosphate synthase subunit HisF (252 aa).

Residues aspartate 11 and aspartate 130 contribute to the active site.

It belongs to the HisA/HisF family. Heterodimer of HisH and HisF.

Its subcellular location is the cytoplasm. It carries out the reaction 5-[(5-phospho-1-deoxy-D-ribulos-1-ylimino)methylamino]-1-(5-phospho-beta-D-ribosyl)imidazole-4-carboxamide + L-glutamine = D-erythro-1-(imidazol-4-yl)glycerol 3-phosphate + 5-amino-1-(5-phospho-beta-D-ribosyl)imidazole-4-carboxamide + L-glutamate + H(+). It participates in amino-acid biosynthesis; L-histidine biosynthesis; L-histidine from 5-phospho-alpha-D-ribose 1-diphosphate: step 5/9. Functionally, IGPS catalyzes the conversion of PRFAR and glutamine to IGP, AICAR and glutamate. The HisF subunit catalyzes the cyclization activity that produces IGP and AICAR from PRFAR using the ammonia provided by the HisH subunit. This is Imidazole glycerol phosphate synthase subunit HisF from Dictyoglomus turgidum (strain DSM 6724 / Z-1310).